The primary structure comprises 457 residues: MALWGGRFSQAADQRFKQFNDSLRFDYRLAEQDIVGSIGWSKALVTVNVLSEQEQQQLEQALNALLVDVQADPEMILQSDAEDIHSWVEQRLIEKVGDLGKKLHTGRSRNDQVATDLKLWCKTQIAELLLSVRQLRQALVTTAEANQDAVMPGYTHLQRAQPVTFAHWCLAYHEMLARDESRLEDTLKRLDVSPLGCGALAGTAYPIDREQLAGWLGFASATRNSLDTVSDRDHVLELLSDASIGMIHLSRFAEDLIFFNSGEAAFVELSDRVTSGSSLMPQKKNPDALELIRGKCGRVQGALTGMMMTLKGLPLAYNKDMQEDKEGLFDALDTWHDCLMMAGLVLEGIQVKRPRCKEAAEQGYANSTELADYLVAKGVPFREAHHIVGEAVVEAIRQGKALEALPLADLQKFSAVIAEDVYPILALQSCLDKRAAQGGVSPQQVAKAISDAKQRLA.

It belongs to the lyase 1 family. Argininosuccinate lyase subfamily.

The protein localises to the cytoplasm. The enzyme catalyses 2-(N(omega)-L-arginino)succinate = fumarate + L-arginine. Its pathway is amino-acid biosynthesis; L-arginine biosynthesis; L-arginine from L-ornithine and carbamoyl phosphate: step 3/3. This Pectobacterium carotovorum subsp. carotovorum (strain PC1) protein is Argininosuccinate lyase.